We begin with the raw amino-acid sequence, 79 residues long: Sec-independent protein translocase protein TatA (79 aa).

Residues 1 to 21 (MGGFTSIWHWVIVLLVIVLLF) traverse the membrane as a helical segment. Residues 48–79 (EEEAKNEPKTLDAQVTQAKVHESSEIKNKQEG) are disordered. Positions 66–79 (KVHESSEIKNKQEG) are enriched in basic and acidic residues.

This sequence belongs to the TatA/E family. The Tat system comprises two distinct complexes: a TatABC complex, containing multiple copies of TatA, TatB and TatC subunits, and a separate TatA complex, containing only TatA subunits. Substrates initially bind to the TatABC complex, which probably triggers association of the separate TatA complex to form the active translocon.

The protein resides in the cell inner membrane. Part of the twin-arginine translocation (Tat) system that transports large folded proteins containing a characteristic twin-arginine motif in their signal peptide across membranes. TatA could form the protein-conducting channel of the Tat system. The polypeptide is Sec-independent protein translocase protein TatA (Helicobacter acinonychis (strain Sheeba)).